A 350-amino-acid polypeptide reads, in one-letter code: Tsukushi (350 aa).

Residues 1–17 (MAPSWLFLLFIPGMVGS) form the signal peptide. The LRRNT domain occupies 18 to 59 (SRSCFPGCQCIVDNFGLFHSFSLTKVDCSGVGPHVVPVSIPL). LRR repeat units lie at residues 60–81 (DTSY…VLSG), 86–107 (TLIN…TFSK), 110–131 (YLES…SFLY), 133–154 (RLTE…AFTL), 159–180 (RSMT…AERP), 183–203 (NIHS…LHGI), 204–225 (PLRH…SFLG), 228–250 (GLTH…SFKT), 253–275 (SLLD…MFFG), and 278–299 (SLQE…IMLN). N-linked (GlcNAc...) asparagine glycosylation is found at Asn75 and Asn91.

As to quaternary structure, interacts with bmp4. Interacts with dll1 (via extracellular region). Interacts with fgf8; inhibits fgf8 signaling. Interacts with nodal2/Xnr2; enhances nodal2 activity.

Its subcellular location is the secreted. Contributes to various developmental events through its interactions with multiple signaling pathways. Dorsalizing factor which functions as an inhibitor of bone morphogenetic proteins (BMP) during gastrulation. Promotes dll1-dependent activation of Notch signaling and is required for neural crest formation. Induces endoderm and dorsal mesoderm formation by enhancing nodal2/Xnr2 activity while inhibiting ventrolateral mesoderm formation through inhibition of fgf8. The sequence is that of Tsukushi (tsku) from Xenopus tropicalis (Western clawed frog).